The sequence spans 235 residues: MFGKIVFLLLVALCAGVQSRYLIVSEPVYYIEHYEEPELLASSRVRRDAHGALTLNSDGTSGAVVKVPFAGNDKNIVSAIGSVDLTDRQKLGAATAGVALDNINGHGLSLTDTHIPGFGDKMTAAGKVNVFHNDNHDITAKAFATRNMPDIANVPNFNTVGGGIDYMFKDKIGASASAAHTDFINRNDYSLDGKLNLFKTPDTSIDFNAGFKKFDTPFMKSSWEPNFGFSLSKYF.

Residues 1–19 (MFGKIVFLLLVALCAGVQS) form the signal peptide. Positions 20 to 47 (RYLIVSEPVYYIEHYEEPELLASSRVRR) are excised as a propeptide.

The protein belongs to the attacin/sarcotoxin-2 family. Post-translationally, attacin F appears to be derived by proteolytic digestion of attacin E.

The protein localises to the secreted. In terms of biological role, hemolymph antibacterial protein. In Hyalophora cecropia (Cecropia moth), this protein is Attacin-E.